Consider the following 180-residue polypeptide: ATP synthase subunit delta (180 aa).

This sequence belongs to the ATPase delta chain family. As to quaternary structure, F-type ATPases have 2 components, F(1) - the catalytic core - and F(0) - the membrane proton channel. F(1) has five subunits: alpha(3), beta(3), gamma(1), delta(1), epsilon(1). F(0) has three main subunits: a(1), b(2) and c(10-14). The alpha and beta chains form an alternating ring which encloses part of the gamma chain. F(1) is attached to F(0) by a central stalk formed by the gamma and epsilon chains, while a peripheral stalk is formed by the delta and b chains.

It is found in the cell inner membrane. Its function is as follows. F(1)F(0) ATP synthase produces ATP from ADP in the presence of a proton or sodium gradient. F-type ATPases consist of two structural domains, F(1) containing the extramembraneous catalytic core and F(0) containing the membrane proton channel, linked together by a central stalk and a peripheral stalk. During catalysis, ATP synthesis in the catalytic domain of F(1) is coupled via a rotary mechanism of the central stalk subunits to proton translocation. Functionally, this protein is part of the stalk that links CF(0) to CF(1). It either transmits conformational changes from CF(0) to CF(1) or is implicated in proton conduction. The chain is ATP synthase subunit delta from Paracidovorax citrulli (strain AAC00-1) (Acidovorax citrulli).